A 164-amino-acid chain; its full sequence is Phosphopantetheine adenylyltransferase (164 aa).

Position 9 (Ser-9) interacts with substrate. Residues Ser-9 to Phe-10 and His-17 each bind ATP. The substrate site is built by Lys-41, Val-78, and Arg-92. ATP contacts are provided by residues Gly-93 to Arg-95, Glu-103, and Ser-128 to Thr-134.

Belongs to the bacterial CoaD family. Homohexamer. The cofactor is Mg(2+).

The protein resides in the cytoplasm. It catalyses the reaction (R)-4'-phosphopantetheine + ATP + H(+) = 3'-dephospho-CoA + diphosphate. Its pathway is cofactor biosynthesis; coenzyme A biosynthesis; CoA from (R)-pantothenate: step 4/5. Reversibly transfers an adenylyl group from ATP to 4'-phosphopantetheine, yielding dephospho-CoA (dPCoA) and pyrophosphate. This is Phosphopantetheine adenylyltransferase from Rhizobium leguminosarum bv. trifolii (strain WSM2304).